Here is a 206-residue protein sequence, read N- to C-terminus: Small ribosomal subunit protein uS4 (206 aa).

Positions C96–V156 constitute an S4 RNA-binding domain.

This sequence belongs to the universal ribosomal protein uS4 family. Part of the 30S ribosomal subunit. Contacts protein S5. The interaction surface between S4 and S5 is involved in control of translational fidelity.

Its function is as follows. One of the primary rRNA binding proteins, it binds directly to 16S rRNA where it nucleates assembly of the body of the 30S subunit. In terms of biological role, with S5 and S12 plays an important role in translational accuracy. In Pseudomonas fluorescens (strain ATCC BAA-477 / NRRL B-23932 / Pf-5), this protein is Small ribosomal subunit protein uS4.